The following is a 1173-amino-acid chain: Pumilio homolog 2 (1173 aa).

Disordered stretches follow at residues Val41–Gly68, Val265–Thr296, Gln480–Ala518, Leu592–Phe662, and Pro730–Leu759. Positions Thr287–Thr296 are enriched in polar residues. The segment covering Gln480 to Gln492 has biased composition (low complexity). Polar residues predominate over residues Val493–Ala518. Low complexity predominate over residues Gln606–Gln622. The segment covering Pro623–Tyr633 has biased composition (polar residues). Low complexity predominate over residues Gly634–Ser657. Residues Gly815–Tyr1155 form the PUM-HD domain. 9 Pumilio repeats span residues Asp835–Ser870, Glu871–Thr906, Arg907–Arg942, Glu943–Glu978, Ala979–Glu1014, Glu1015–Cys1050, Glu1051–Asp1086, Glu1087–His1129, and Lys1130–Gly1167. An adenine-nucleotide binding in RNA target region spans residues Ser850 to Gln854. A uracil-nucleotide binding in RNA target region spans residues Asn886–Gln890. Positions Cys922–Gln926 are adenine-nucleotide binding in RNA target. Residues Asn958–Gln962 form a non-specific-nucleotide binding in RNA target region. Residues Cys994 to Gln998 are adenine-nucleotide binding in RNA target. Residues Asn1030–Gln1034 are uracil-nucleotide binding in RNA target. The interval Ser1066 to Glu1070 is guanine-nucleotide binding in RNA target. Positions Asn1109–Gln1113 are uracil-nucleotide binding in RNA target.

As to quaternary structure, component of a complex with papd4, sympk, tacc3, parn, dazl and cpeb1. In terms of processing, phosphorylated.

The protein localises to the cytoplasm. Its subcellular location is the P-body. It is found in the cytoplasmic granule. Sequence-specific RNA-binding protein that acts as a post-transcriptional repressor by binding the 3'-UTR of mRNA targets. Binds to an RNA consensus sequence, the Pumilio Response Element (PRE), 5'-UGUANAUA-3', that is related to the Nanos Response Element (NRE). Mediates post-transcriptional repression of transcripts via different mechanisms: acts via direct recruitment of deadenylase complexes leading to translational inhibition and mRNA degradation. Also mediates deadenylation-independent repression by promoting accessibility of miRNAs. This Xenopus laevis (African clawed frog) protein is Pumilio homolog 2 (pum2).